The following is a 190-amino-acid chain: Dynein axonemal light chain 1 (190 aa).

Ala-2 is modified (N-acetylalanine). LRR repeat units follow at residues 47-69 (LANC…LNGL), 70-93 (KNLR…AVGD), 95-114 (LEEL…IHVM), and 115-138 (RKLK…KLAE). Ser-56 is subject to Phosphoserine.

Belongs to the dynein light chain LC1-type family. As to quaternary structure, interacts with ZMYND10 (via C-terminus). Interacts with DNAH5, a outer arm dynein heavy chain. Interacts with tubulin located within the A-tubule of the outer doublets in a ATP-independent manner.

Its subcellular location is the cytoplasm. It is found in the cytoskeleton. The protein resides in the cilium axoneme. In terms of biological role, part of the multisubunit axonemal ATPase complexes that generate the force for cilia motility and govern beat frequency. Component of the outer arm dynein (ODA). May be involved in a mechanosensory feedback mechanism controlling ODA activity based on external conformational cues by tethering the outer arm dynein heavy chain (DNAH5) to the microtubule within the axoneme. Important for ciliary function in the airways and for the function of the cilia that produce the nodal flow essential for the determination of the left-right asymmetry. In Rattus norvegicus (Rat), this protein is Dynein axonemal light chain 1.